The sequence spans 102 residues: Transposable element activator uncharacterized 12 kDa protein (102 aa).

Residues 24–51 are compositionally biased toward basic residues; sequence HNHNQNHNHSHNLNPKKKHHRRGQRSAH. The tract at residues 24-55 is disordered; that stretch reads HNHNQNHNHSHNLNPKKKHHRRGQRSAHRMYG.

The sequence is that of Transposable element activator uncharacterized 12 kDa protein from Zea mays (Maize).